Consider the following 412-residue polypeptide: Putative competence-damage inducible protein (412 aa).

The protein belongs to the CinA family.

The sequence is that of Putative competence-damage inducible protein from Caldanaerobacter subterraneus subsp. tengcongensis (strain DSM 15242 / JCM 11007 / NBRC 100824 / MB4) (Thermoanaerobacter tengcongensis).